We begin with the raw amino-acid sequence, 550 residues long: C-type lectin domain family 4 member F (550 aa).

Residues 1–42 (MKEAELNRDVAKFCTDNQCVILQPQGLGPKSAAPMAPRTLRH) are Cytoplasmic-facing. A helical; Signal-anchor for type II membrane protein membrane pass occupies residues 43-69 (VQAIVALVVVTVFFSLLALFVVVLQPW). The Extracellular segment spans residues 70 to 550 (RQKQNEDHPV…DWSVARTDQS (481 aa)). N-linked (GlcNAc...) asparagine glycosylation is found at asparagine 87, asparagine 93, asparagine 115, asparagine 132, asparagine 209, and asparagine 255. Residues 438–538 (NFCVSQGAHL…GTAYNWVCKK (101 aa)) enclose the C-type lectin domain. 2 disulfide bridges follow: cysteine 440–cysteine 536 and cysteine 516–cysteine 528.

Kupffer cells.

It localises to the membrane. Receptor with an affinity for galactose and fucose. Could be involved in endocytosis. The sequence is that of C-type lectin domain family 4 member F (Clec4f) from Rattus norvegicus (Rat).